A 237-amino-acid chain; its full sequence is Orotidine 5'-phosphate decarboxylase (237 aa).

Residues Asp11, Lys34, 61-70 (DLKLHDIPNT), Thr124, Arg186, Gln195, Gly215, and Arg216 each bind substrate. Catalysis depends on Lys63, which acts as the Proton donor.

The protein belongs to the OMP decarboxylase family. Type 1 subfamily. In terms of assembly, homodimer.

It catalyses the reaction orotidine 5'-phosphate + H(+) = UMP + CO2. Its pathway is pyrimidine metabolism; UMP biosynthesis via de novo pathway; UMP from orotate: step 2/2. Its function is as follows. Catalyzes the decarboxylation of orotidine 5'-monophosphate (OMP) to uridine 5'-monophosphate (UMP). In Lactococcus lactis subsp. lactis (strain IL1403) (Streptococcus lactis), this protein is Orotidine 5'-phosphate decarboxylase.